A 184-amino-acid polypeptide reads, in one-letter code: MGLEERLPGGILLSTVETVAGYVRKGSLWPATFGLACCAIEMMSTAGPRFDIARFGMERFSATPRQADLMIVAGRVSQKMAPVLRQIYDQMVEPKWVLAMGVCASSGGMFNNYAVVQGVDHVVPVDIYLPGCPPRPEMLLHAILKLHDKIQQMPLGVNREEAIREAEQAALAVPPTIELKGLLR.

Positions 37, 38, 103, and 132 each coordinate [4Fe-4S] cluster.

It belongs to the complex I 20 kDa subunit family. In terms of assembly, NDH-1 is composed of 14 different subunits. Subunits NuoB, C, D, E, F, and G constitute the peripheral sector of the complex. It depends on [4Fe-4S] cluster as a cofactor.

The protein localises to the cell membrane. It catalyses the reaction a quinone + NADH + 5 H(+)(in) = a quinol + NAD(+) + 4 H(+)(out). Functionally, NDH-1 shuttles electrons from NADH, via FMN and iron-sulfur (Fe-S) centers, to quinones in the respiratory chain. The immediate electron acceptor for the enzyme in this species is believed to be a menaquinone. Couples the redox reaction to proton translocation (for every two electrons transferred, four hydrogen ions are translocated across the cytoplasmic membrane), and thus conserves the redox energy in a proton gradient. The sequence is that of NADH-quinone oxidoreductase subunit B from Mycolicibacterium smegmatis (strain ATCC 700084 / mc(2)155) (Mycobacterium smegmatis).